The primary structure comprises 397 residues: Carbamoyl phosphate synthase small chain (397 aa).

Residues 1-204 (MSPLLPSFPF…PAYRTLDTSK (204 aa)) form a CPSase region. The L-glutamine site is built by serine 53, glycine 256, and glycine 258. One can recognise a Glutamine amidotransferase type-1 domain in the interval 208-395 (KVVAYDFGVK…MELMNAAKKE (188 aa)). Cysteine 284 (nucleophile) is an active-site residue. L-glutamine-binding residues include leucine 285, glutamine 288, asparagine 326, glycine 328, and phenylalanine 329. Active-site residues include histidine 368 and glutamate 370.

It belongs to the CarA family. As to quaternary structure, composed of two chains; the small (or glutamine) chain promotes the hydrolysis of glutamine to ammonia, which is used by the large (or ammonia) chain to synthesize carbamoyl phosphate. Tetramer of heterodimers (alpha,beta)4.

It carries out the reaction hydrogencarbonate + L-glutamine + 2 ATP + H2O = carbamoyl phosphate + L-glutamate + 2 ADP + phosphate + 2 H(+). The catalysed reaction is L-glutamine + H2O = L-glutamate + NH4(+). Its pathway is amino-acid biosynthesis; L-arginine biosynthesis; carbamoyl phosphate from bicarbonate: step 1/1. The protein operates within pyrimidine metabolism; UMP biosynthesis via de novo pathway; (S)-dihydroorotate from bicarbonate: step 1/3. In terms of biological role, small subunit of the glutamine-dependent carbamoyl phosphate synthetase (CPSase). CPSase catalyzes the formation of carbamoyl phosphate from the ammonia moiety of glutamine, carbonate, and phosphate donated by ATP, constituting the first step of 2 biosynthetic pathways, one leading to arginine and/or urea and the other to pyrimidine nucleotides. The small subunit (glutamine amidotransferase) binds and cleaves glutamine to supply the large subunit with the substrate ammonia. The sequence is that of Carbamoyl phosphate synthase small chain from Polynucleobacter asymbioticus (strain DSM 18221 / CIP 109841 / QLW-P1DMWA-1) (Polynucleobacter necessarius subsp. asymbioticus).